Consider the following 288-residue polypeptide: Sulfhydrogenase 2 subunit gamma (288 aa).

The region spanning 4–103 (YRSYDARIIE…RGPYGNGFPM (100 aa)) is the FAD-binding FR-type domain. Residues cysteine 250, cysteine 255, cysteine 258, and cysteine 270 each coordinate [2Fe-2S] cluster.

Dimer of heterotetramer of alpha, beta, gamma and delta subunits. The nickel-containing alpha and delta subunits constitute the hydrogenase activity. The beta and gamma subunits (flavin-containing dimer) constitute the sulfur reductase activity. FAD serves as cofactor. [2Fe-2S] cluster is required as a cofactor.

It is found in the cytoplasm. The catalysed reaction is n sulfur + H2 = (n-1) sulfur + hydrogen sulfide + H(+). In terms of biological role, part of a bifunctional enzyme complex that functions as a hydrogen-evolving hydrogenase with sulfur-reducing activity. May play a role in hydrogen cycling during fermentative growth. Activity exhibited with NAD in addition to NADPH. The beta and gamma subunits form the sulfur-reducing component that catalyzes the cytoplasmic production of hydrogen sulfide in the presence of elemental sulfur. The polypeptide is Sulfhydrogenase 2 subunit gamma (Pyrococcus furiosus (strain ATCC 43587 / DSM 3638 / JCM 8422 / Vc1)).